Here is a 305-residue protein sequence, read N- to C-terminus: UDP-3-O-acyl-N-acetylglucosamine deacetylase (305 aa).

Zn(2+)-binding residues include histidine 78, histidine 237, and aspartate 241. Histidine 264 serves as the catalytic Proton donor.

Belongs to the LpxC family. Requires Zn(2+) as cofactor.

It carries out the reaction a UDP-3-O-[(3R)-3-hydroxyacyl]-N-acetyl-alpha-D-glucosamine + H2O = a UDP-3-O-[(3R)-3-hydroxyacyl]-alpha-D-glucosamine + acetate. It participates in glycolipid biosynthesis; lipid IV(A) biosynthesis; lipid IV(A) from (3R)-3-hydroxytetradecanoyl-[acyl-carrier-protein] and UDP-N-acetyl-alpha-D-glucosamine: step 2/6. In terms of biological role, catalyzes the hydrolysis of UDP-3-O-myristoyl-N-acetylglucosamine to form UDP-3-O-myristoylglucosamine and acetate, the committed step in lipid A biosynthesis. This is UDP-3-O-acyl-N-acetylglucosamine deacetylase from Burkholderia mallei (strain NCTC 10247).